The chain runs to 401 residues: Enolase (401 aa).

Gln154 serves as a coordination point for (2R)-2-phosphoglycerate. Glu197 acts as the Proton donor in catalysis. 3 residues coordinate Mg(2+): Asp233, Glu274, and Asp301. (2R)-2-phosphoglycerate is bound by residues Lys326, Arg355, Ser356, and Lys377. Catalysis depends on Lys326, which acts as the Proton acceptor.

The protein belongs to the enolase family. It depends on Mg(2+) as a cofactor.

It localises to the cytoplasm. Its subcellular location is the secreted. The protein resides in the cell surface. The enzyme catalyses (2R)-2-phosphoglycerate = phosphoenolpyruvate + H2O. The protein operates within carbohydrate degradation; glycolysis; pyruvate from D-glyceraldehyde 3-phosphate: step 4/5. Its function is as follows. Catalyzes the reversible conversion of 2-phosphoglycerate (2-PG) into phosphoenolpyruvate (PEP). It is essential for the degradation of carbohydrates via glycolysis. This is Enolase from Thermoplasma acidophilum (strain ATCC 25905 / DSM 1728 / JCM 9062 / NBRC 15155 / AMRC-C165).